Here is a 1816-residue protein sequence, read N- to C-terminus: MGWSTAWCSVLALWLLWCAVCSNAASGDGNAFPFDIEGSAVVGRQDPSETSDSGVTLGRLPPAAERCDAGFFRTLSGECAPCDCNGNSHECLDGSGFCLHCQRNTTGEHCEKCLDGYIGDSIRGTPRFCQPCPCPLPHLANFAESCYRKNGAVRCICKENYVGPNCERCAPGYYGNPLLIGSTCKKCDCSGNSDPNLIFEDCDEITGQCRNCLRNTTGFKCERCAPGYYGDARTAKNCAVCNCGGGPCDSVTGECLEEGFEVPTGCDKCVWDLTDDLRLAALSIEESKSGLLSVSSGAAAHRHVTDMNSTIHLLRTRLSERENQYTLRKIQINNSENTLRSLLPDVEGLHEKGSQASRKGMLVEKESMDTIDQATHLVEQAHNMRDKIQEINSKMLYYGENQELGPEEIAEKLVLAQKMLEEIRSRQPFLTHRELVDEEADEAQELLSQAENWQRLHNDTRSLFPVVLEQLDDYNAKLSDLQESINQALDHVRDAEDMNRAITFKQRDHEKQHERVKEQMEVVGASLSMSADSLTIPQLTLEELDEIIKNASGIYAEIDGAKNELQGKLSNLSNLSHDLVQEATDHAYNLQQEADELSRNLHSSDMNGLVQKALDASNVYENIANYVSEANETAELALNITDRIYDAVSGIDTQIIYHKDESDNLLNQARELQAKADSSNDEAVADTSRRVGGALWRKGALRDRLNDAVKQLQAAERGDAHQRLGQSKLFIEEANKTTAAVQQVTTPMANNLSNWSQNLQTFDSSAYNTAVDSARDAVRNLTEVVPQLLDQLRTVEQKRPASNISASIQRIRELIAQTRSVASKIQVSMMFDGQSAVEVHPKVSVDDLKAFTSISLYMKPPPKPAEPTGAWVADQFVLYLGSKNAKKEYMGLAIKNDNLVYVYNLGMKDVEILLDSKPVSSWPAYFSIVKIERVGKHGKVFLTVPSLSSTAEEKFIKKGEFAGDDSLLDLTPEDTVFYVGGVPANFKLPASLNLPSYSGCLELATLNNDVISLYNFKHIYNMDPSKSVPCARDKLAFTQSRAASYFFDGSSYAVVRDITRRGKFGQVTRFDIEIRTPADNGLVLLMVNGSMFFSLEMRNGYLHVFYDFGFSNGPVHLEDTLKKAQINDAKYHEISIIYHNDKKMILVVDRRHVKSTDNEKKKIPFTDIYIGGAPQEVLQSRTLRAHLPLDINFRGCMKGFQFQKKDFNLLEQTETLGVGYGCPEDSLISRRAYFNGQSFIASIQKISFFDGFEGGFNFRTLQPNGLLFYYTSGSDVFSISLDNGTVVMDVKGIKVMSTDKQYHDGLPHFVVTSISDTRYELVVDKSRLRGKNPTKGKAEQTQTTEKKFYFGGSPISPQYANFTGCISNAYFTRLDRDVEVEDFQRYSEKVHTSLYECPIESSPLFLLHKKGKNSSKPKTNKQGEKSKDAPSWDPIGLKFLEQKAPRDSHCHLSSSPRAIEHAYQYGGTANSRQEFEHEQGDFGEKSQFAIRLKTRSSHGMIFYVSDQEENDFMTLFLAHGRLVFMFNVGHKKLKIRSQEKYNDGLWHDVIFIREKSSGRLVIDGLRVLEERLPPSGAAWKIKGPIYLGGVAPGRAVKNVQITSVYSFSGCLGNLQLNGASITSASQTFSVTPCFEGPMETGTYFSTEGGYVVLDESFNIGLKFEIAFEVRPRSSSGTLVHGHSVNGEYLNVHMRNGQVIVKVNNGVRDFSTSVTPKQNLCDGRWHRITVIRDSNVVQLDVDSEVNHVVGPLNPKPVDHREPVFVGGVPESLLTPRLAPSKPFTGCIRHFVIDSRPVSFSKAALVSGAVSINSCPTA.

An N-terminal signal peptide occupies residues 1–24; it reads MGWSTAWCSVLALWLLWCAVCSNA. The O-linked (Xyl...) (chondroitin sulfate) serine glycan is linked to S39. Intrachain disulfides connect C82–C91, C84–C98, C101–C110, C113–C129, C132–C146, C134–C155, C157–C166, C169–C184, C187–C202, C189–C209, C212–C221, and C224–C238. Laminin EGF-like domains lie at 82 to 131, 132 to 186, and 187 to 240; these read CDCN…FCQP, CPCP…TCKK, and CDCS…NCAV. An N-linked (GlcNAc...) asparagine glycan is attached at N104. Residue N215 is glycosylated (N-linked (GlcNAc...) asparagine). Positions 241 to 255 constitute a Laminin EGF-like 4; truncated domain; it reads CNCGGGPCDSVTGEC. The segment at 256–825 is domain II and I; sequence LEEGFEVPTG…AQTRSVASKI (570 aa). Residues N308, N333, N458, N550, N571, N574, N631, and N639 are each glycosylated (N-linked (GlcNAc...) asparagine). Residues 431 to 523 adopt a coiled-coil conformation; that stretch reads THRELVDEEA…ERVKEQMEVV (93 aa). Positions 556-604 form a coiled coil; the sequence is AEIDGAKNELQGKLSNLSNLSHDLVQEATDHAYNLQQEADELSRNLHSS. Positions 655 to 717 form a coiled coil; the sequence is IIYHKDESDN…AVKQLQAAER (63 aa). A Cell attachment site motif is present at residues 717–719; sequence RGD. N735, N751, N754, N780, and N803 each carry an N-linked (GlcNAc...) asparagine glycan. Residues 770–799 are a coiled coil; it reads AVDSARDAVRNLTEVVPQLLDQLRTVEQKR. 3 consecutive Laminin G-like domains span residues 826–1030, 1042–1222, and 1229–1397; these read QVSM…SVPC, AASY…GYGC, and SRRA…LYEC. C1000 and C1030 form a disulfide bridge. The N-linked (GlcNAc...) asparagine glycan is linked to N1088. Cysteines 1196 and 1222 form a disulfide. 2 N-linked (GlcNAc...) asparagine glycosylation sites follow: N1283 and N1361. Cysteines 1365 and 1397 form a disulfide. The span at 1409–1419 shows a compositional bias: basic residues; sequence KKGKNSSKPKT. Positions 1409-1433 are disordered; that stretch reads KKGKNSSKPKTNKQGEKSKDAPSWD. The span at 1421–1430 shows a compositional bias: basic and acidic residues; it reads KQGEKSKDAP. Laminin G-like domains follow at residues 1462–1633 and 1640–1813; these read AYQY…VTPC and TGTY…INSC. 2 disulfide bridges follow: C1610–C1633 and C1785–C1813.

In terms of assembly, laminin is a complex glycoprotein, consisting of three different polypeptide chains (alpha, beta, gamma), which are bound to each other by disulfide bonds into a cross-shaped molecule comprising one long and three short arms with globules at each end. Alpha-4 is a subunit of laminin-8 (laminin-411), laminin-9 (laminin-421) and laminin-14 (laminin-423). As to expression, strongly expressed in peripheral nerves, cardiac muscle, fat, dermis, lung stroma, aortic endothelium, endocardium and endothelium of blood vessels in skin and brain.

The protein resides in the secreted. It localises to the extracellular space. Its subcellular location is the extracellular matrix. It is found in the basement membrane. In terms of biological role, binding to cells via a high affinity receptor, laminin is thought to mediate the attachment, migration and organization of cells into tissues during embryonic development by interacting with other extracellular matrix components. The chain is Laminin subunit alpha-4 (Lama4) from Mus musculus (Mouse).